The primary structure comprises 110 residues: U1-lycotoxin-Ls1mm (110 aa).

A signal peptide spans 1-20 (MKFVLLFGVLLVTLFSYSSA). Positions 21 to 44 (EMLDDFDQADEDELLSLIEKEEAR) are excised as a propeptide. 4 disulfide bridges follow: Cys47–Cys62, Cys54–Cys71, Cys61–Cys89, and Cys73–Cys87.

The protein belongs to the neurotoxin 19 (CSTX) family. 03 subfamily. As to expression, expressed by the venom gland.

It is found in the secreted. The polypeptide is U1-lycotoxin-Ls1mm (Lycosa singoriensis (Wolf spider)).